The sequence spans 273 residues: Histone H1.2 (273 aa).

A disordered region spans residues 1–63; it reads MSIEEENVPT…TKKKTTSSHP (63 aa). Residue S2 is modified to N-acetylserine. S14 is subject to Phosphoserine. Over residues 33–59 the composition is skewed to basic residues; it reads GKSKKTTTAKATKKPVKAAAPTKKKTT. Residues 61–130 enclose the H15 domain; that stretch reads SHPTYEEMIK…KVKASFKIPS (70 aa). Glycyl lysine isopeptide (Lys-Gly) (interchain with G-Cter in ubiquitin) cross-links involve residues K156 and K165. Low complexity-rich tracts occupy residues 193-216 and 237-256; these read KVTA…VAAK and KKVA…PAKS. The disordered stretch occupies residues 193–273; the sequence is KVTAAKPKSK…KRASTRKAKK (81 aa). Residues 257-273 are compositionally biased toward basic residues; it reads VKVKSPAKRASTRKAKK.

Belongs to the histone H1/H5 family.

The protein localises to the nucleus. It is found in the chromosome. Its function is as follows. Histones H1 are necessary for the condensation of nucleosome chains into higher-order structures. This Arabidopsis thaliana (Mouse-ear cress) protein is Histone H1.2.